Consider the following 835-residue polypeptide: Serine/threonine-protein kinase TNNI3K (835 aa).

Residues 21–51 (SESYVITIERLEDDLQIKEKELTELRNIFGS) are a coiled coil. ANK repeat units follow at residues 66–96 (NGLS…RPSR), 100–129 (NGFT…DIQQ), 133–162 (GGLT…NVNI), 166–195 (VFFT…DVNV), 199–228 (VGDR…KADV), 234–263 (EDHV…EVQP), 269–298 (YGDT…TESL), 304–335 (FSET…NINH), 339–368 (DGHT…DMNL), and 381–410 (DEQT…PQDE). The Protein kinase domain occupies 463 to 723 (IEFHEIIGSG…EVVMKLEECL (261 aa)). ATP is bound by residues 469–477 (IGSGSFGKV) and Lys490. Asp588 serves as the catalytic Proton acceptor. The segment covering 732–746 (ASSNSSGSLSPSSSS) has biased composition (low complexity). Positions 732–751 (ASSNSSGSLSPSSSSDCLVN) are disordered.

It belongs to the protein kinase superfamily. TKL Ser/Thr protein kinase family. MAP kinase kinase kinase subfamily. In terms of assembly, interacts with TNNI3, ACTC1, ACTA1, MYBPC3, AIP, FABP3 and HADHB. Mg(2+) serves as cofactor. In terms of processing, autophosphorylated. As to expression, highly expressed in both adult and fetal heart.

The protein resides in the nucleus. It localises to the cytoplasm. The enzyme catalyses L-seryl-[protein] + ATP = O-phospho-L-seryl-[protein] + ADP + H(+). It carries out the reaction L-threonyl-[protein] + ATP = O-phospho-L-threonyl-[protein] + ADP + H(+). Its function is as follows. May play a role in cardiac physiology. The polypeptide is Serine/threonine-protein kinase TNNI3K (Homo sapiens (Human)).